A 199-amino-acid chain; its full sequence is NAD(P)H dehydrogenase (quinone) (199 aa).

The Flavodoxin-like domain occupies 4 to 190 (VLVLYYSAYG…AGARYQGRVI (187 aa)). FMN contacts are provided by residues 10-15 (SAYGHI) and 78-80 (TRF). Tyrosine 12 is a binding site for NAD(+). Tryptophan 98 is a binding site for substrate. FMN-binding positions include 113 to 119 (STATQHG) and histidine 134.

Belongs to the WrbA family. The cofactor is FMN.

The catalysed reaction is a quinone + NADH + H(+) = a quinol + NAD(+). It catalyses the reaction a quinone + NADPH + H(+) = a quinol + NADP(+). The protein is NAD(P)H dehydrogenase (quinone) of Bradyrhizobium sp. (strain ORS 278).